Reading from the N-terminus, the 304-residue chain is Acetyl-coenzyme A carboxylase carboxyl transferase subunit beta (304 aa).

Residues 23–292 (VWTKCDSCGQ…PNPEAPREGV (270 aa)) form the CoA carboxyltransferase N-terminal domain. Residues Cys27, Cys30, Cys46, and Cys49 each contribute to the Zn(2+) site. The C4-type zinc finger occupies 27–49 (CDSCGQVLYRAELERNLEVCPKC). The disordered stretch occupies residues 284–304 (NPEAPREGVVVPPVPDQEPEA). Residues 295–304 (PPVPDQEPEA) are compositionally biased toward pro residues.

Belongs to the AccD/PCCB family. In terms of assembly, acetyl-CoA carboxylase is a heterohexamer composed of biotin carboxyl carrier protein (AccB), biotin carboxylase (AccC) and two subunits each of ACCase subunit alpha (AccA) and ACCase subunit beta (AccD). Zn(2+) serves as cofactor.

The protein resides in the cytoplasm. The catalysed reaction is N(6)-carboxybiotinyl-L-lysyl-[protein] + acetyl-CoA = N(6)-biotinyl-L-lysyl-[protein] + malonyl-CoA. It participates in lipid metabolism; malonyl-CoA biosynthesis; malonyl-CoA from acetyl-CoA: step 1/1. Component of the acetyl coenzyme A carboxylase (ACC) complex. Biotin carboxylase (BC) catalyzes the carboxylation of biotin on its carrier protein (BCCP) and then the CO(2) group is transferred by the transcarboxylase to acetyl-CoA to form malonyl-CoA. This is Acetyl-coenzyme A carboxylase carboxyl transferase subunit beta from Escherichia coli O139:H28 (strain E24377A / ETEC).